We begin with the raw amino-acid sequence, 576 residues long: Vacuolar protein sorting-associated protein vps5 (576 aa).

Disordered regions lie at residues 1–60 (MLGH…PRKR) and 156–198 (DAAS…APQS). T55 bears the Phosphothreonine mark. A compositionally biased stretch (polar residues) spans 156-169 (DAASSSAPNFTHTV). A compositionally biased stretch (low complexity) spans 170 to 181 (SSASSQKQGSTS). The 118-residue stretch at 200–317 (TPFYIQVHDP…KLFLEAETFD (118 aa)) folds into the PX domain. A 1,2-diacyl-sn-glycero-3-phospho-(1D-myo-inositol-3-phosphate) is bound by residues R244, K270, and R284. S332 carries the post-translational modification Phosphoserine.

It belongs to the sorting nexin family. As to quaternary structure, component of the retromer complex which consists of vps29, vps26, vps35, vps5 and vps17.

Its subcellular location is the cytoplasm. It is found in the golgi apparatus. The protein localises to the membrane. Required for efficient sporulation target of PtdIns(3)P in vesicle transport required for onset of the forespore membrane formation. Functionally, plays a role in vesicular protein sorting. Required for the endosome-to-Golgi retrieval of the vacuolar protein sorting receptor pep1/vps10. Component of the membrane-associated retromer complex which is essential in endosome-to-Golgi retrograde transport. The vps29-vps26-vps35 subcomplex may be involved in cargo selection. This chain is Vacuolar protein sorting-associated protein vps5 (vps5), found in Schizosaccharomyces pombe (strain 972 / ATCC 24843) (Fission yeast).